Here is a 175-residue protein sequence, read N- to C-terminus: Methylated-DNA--protein-cysteine methyltransferase (175 aa).

Tyr-115 and Arg-127 together coordinate DNA. Catalysis depends on Cys-144, which acts as the Nucleophile; methyl group acceptor.

Belongs to the MGMT family.

It is found in the nucleus. It catalyses the reaction a 6-O-methyl-2'-deoxyguanosine in DNA + L-cysteinyl-[protein] = S-methyl-L-cysteinyl-[protein] + a 2'-deoxyguanosine in DNA. The enzyme catalyses a 4-O-methyl-thymidine in DNA + L-cysteinyl-[protein] = a thymidine in DNA + S-methyl-L-cysteinyl-[protein]. Its function is as follows. Involved in the cellular defense against the biological effects of O6-methylguanine (O6-MeG) and O4-methylthymine (O4-MeT) in DNA. Repairs the methylated nucleobase in DNA by stoichiometrically transferring the methyl group to a cysteine residue in the enzyme. This is a suicide reaction: the enzyme is irreversibly inactivated. The polypeptide is Methylated-DNA--protein-cysteine methyltransferase (MGT1) (Candida albicans (strain SC5314 / ATCC MYA-2876) (Yeast)).